The primary structure comprises 175 residues: Universal stress protein A-like protein (175 aa).

The AMP site is built by alanine 11, valine 12, asparagine 13, serine 26, cysteine 27, valine 53, glycine 131, arginine 133, threonine 145, valine 146, and serine 147.

The protein belongs to the universal stress protein A family. In terms of assembly, homohexamer.

This is Universal stress protein A-like protein from Arabidopsis thaliana (Mouse-ear cress).